A 487-amino-acid polypeptide reads, in one-letter code: Cytochrome P450 2C16 (487 aa).

C432 provides a ligand contact to heme.

This sequence belongs to the cytochrome P450 family. Heme serves as cofactor. In terms of tissue distribution, expressed constitutively in liver, lung, testes, and kidney.

It localises to the endoplasmic reticulum membrane. Its subcellular location is the microsome membrane. The catalysed reaction is an organic molecule + reduced [NADPH--hemoprotein reductase] + O2 = an alcohol + oxidized [NADPH--hemoprotein reductase] + H2O + H(+). Functionally, cytochromes P450 are a group of heme-thiolate monooxygenases. In liver microsomes, this enzyme is involved in an NADPH-dependent electron transport pathway. It oxidizes a variety of structurally unrelated compounds, including steroids, fatty acids, and xenobiotics. The chain is Cytochrome P450 2C16 (CYP2C16) from Oryctolagus cuniculus (Rabbit).